The following is a 379-amino-acid chain: MTSETSVNLLDFDAEGLVAYCGSLGEKPFRAKQLQRWIHQYNAGDFDGMTDLAKSLREKLKGRASIVMPDIASDHVSTDGTRKWLIDVGNGNAVETVFIPEETRGTLCVSSQAGCAVNCRFCSTGKQGFSRNLSTAEIIGQLRMAEFALRASLGRAPGPNGKAERVVTNVVMMGMGEPLLNYSAVVPAMRLMLDDNAYGLSRRRVTLSTSGVVPMMDRLGAELPVALAVSLHAPNDALRDELVPLNKKYPLRELMAACQRYLKVAPRDFITFEYCMLDGVNDTEAHARELLAVTRDVPCKFNLIPFNPFPESGLIRSKPEQIKRFAQVLIDAGVVTTVRKTRGDDIDAACGQLAGAVKDRTRLAERTGAAGKIIEVRAV.

E95 (proton acceptor) is an active-site residue. The Radical SAM core domain occupies 101-345 (EETRGTLCVS…TTVRKTRGDD (245 aa)). A disulfide bridge links C108 with C350. [4Fe-4S] cluster is bound by residues C115, C119, and C122. S-adenosyl-L-methionine contacts are provided by residues 176-177 (GE), S208, 230-232 (SLH), and N307. C350 (S-methylcysteine intermediate) is an active-site residue.

Belongs to the radical SAM superfamily. RlmN family. It depends on [4Fe-4S] cluster as a cofactor.

Its subcellular location is the cytoplasm. It carries out the reaction adenosine(2503) in 23S rRNA + 2 reduced [2Fe-2S]-[ferredoxin] + 2 S-adenosyl-L-methionine = 2-methyladenosine(2503) in 23S rRNA + 5'-deoxyadenosine + L-methionine + 2 oxidized [2Fe-2S]-[ferredoxin] + S-adenosyl-L-homocysteine. The catalysed reaction is adenosine(37) in tRNA + 2 reduced [2Fe-2S]-[ferredoxin] + 2 S-adenosyl-L-methionine = 2-methyladenosine(37) in tRNA + 5'-deoxyadenosine + L-methionine + 2 oxidized [2Fe-2S]-[ferredoxin] + S-adenosyl-L-homocysteine. Its function is as follows. Specifically methylates position 2 of adenine 2503 in 23S rRNA and position 2 of adenine 37 in tRNAs. m2A2503 modification seems to play a crucial role in the proofreading step occurring at the peptidyl transferase center and thus would serve to optimize ribosomal fidelity. This Burkholderia cenocepacia (strain HI2424) protein is Dual-specificity RNA methyltransferase RlmN.